Reading from the N-terminus, the 521-residue chain is MTIEAAMGEEAIKENLEQFLIVLSVSLGVATLSQISSFFRQIPYTLLLVIVGLGLAFVDIRLVNLSPELILEIFLPPLLFEAAWNIRWRNLKKNLFPVVLLAIIGVVISVVGIGFSLNYFSGLSLPIALLVGAILAATDPVSVIALFRELGVGERLTVLMEGESLFNDGVAVVAFSLLVGIPLGTQEFSVTNTLIQFVTLQGIGIGCGGVIGFGISYLTQRFDLPLVEQSLTLVSAYGTYLITEELGGSGVIGVVTVGLILGNFGSRIGMNPRTRLLVSEFWEFIAFFVNSIVFLLIGDQINIRGLADNGQLILITIIALVIIRAISIYGLGTISNLITKQDISWQEETVLWWGGLRGSVSIALALSVPVMLDGRQDIIEAVFGVVLFTLLVQGLTMQTVIEKLGLIGDRAQRRTYSELIARRSALERVLAHLNAVPPSPSIRMKSLKTTKEASKGQLESRQTKKLRSYNNSYPQLRSLEQEQLRELTFKVEADTYAELIRAGKLNNNLSPLLQEVLAKPE.

Residues Met1–Gln18 are Periplasmic-facing. A helical membrane pass occupies residues Phe19–Phe39. Topologically, residues Arg40–Gln41 are cytoplasmic. The chain crosses the membrane as a helical span at residues Ile42–Leu62. The Periplasmic portion of the chain corresponds to Val63–Asn94. A helical transmembrane segment spans residues Leu95–Phe115. At Ser116 to Pro126 the chain is on the cytoplasmic side. The chain crosses the membrane as a helical span at residues Ile127–Phe147. The Periplasmic segment spans residues Arg148 to Ser164. The chain crosses the membrane as a helical span at residues Leu165–Thr185. Over Gln186–Leu194 the chain is Cytoplasmic. The helical transmembrane segment at Ile195–Ile215 threads the bilayer. Over Ser216 to Glu245 the chain is Periplasmic. Residues Leu246–Ser266 traverse the membrane as a helical segment. Residues Arg267–Leu276 are Cytoplasmic-facing. Residues Leu277–Ile297 form a helical membrane-spanning segment. The Periplasmic portion of the chain corresponds to Gly298 to Gln311. The helical transmembrane segment at Leu312–Gly332 threads the bilayer. At Thr333–Thr349 the chain is on the cytoplasmic side. Residues Val350–Val370 traverse the membrane as a helical segment. Residues Met371–Glu380 are Periplasmic-facing. Residues Ala381–Ile401 form a helical membrane-spanning segment. At Glu402–Glu521 the chain is on the cytoplasmic side.

It belongs to the monovalent cation:proton antiporter 1 (CPA1) transporter (TC 2.A.36) family.

It is found in the cell inner membrane. Its function is as follows. Na(+)/H(+) antiporter that extrudes sodium in exchange for external protons. Also shows high Ca(2+)/H(+) antiporter activity at alkaline pH. Does not catalyze exchange between Li(+) and H(+). The polypeptide is Na(+)/H(+) antiporter ApNhaP (apnhaP) (Aphanothece halophytica).